Here is a 360-residue protein sequence, read N- to C-terminus: Phospho-N-acetylmuramoyl-pentapeptide-transferase (360 aa).

10 helical membrane-spanning segments follow: residues 21 to 41, 73 to 93, 98 to 118, 132 to 152, 168 to 188, 199 to 219, 236 to 256, 263 to 283, 288 to 308, and 338 to 358; these read YITFRAIMALLTAMGIGLWIG, TMGGIMILIAIGVSTLLWADL, VWFVLFVLFGYGAVGFVDDYW, WKYFWLSVIALIAVFGIYAVG, FMPQLGIFFIILSYFVIVGTS, GLAIVPTIMVASAFALIAWAT, AGELVILCTAIVGAGLGFLWY, VFMGDVGSLSLGGALGTIAVL, LLLVIMGGVFVVEALSVILQV, and VIVRFWIITLMLVLIGLVTLK.

It belongs to the glycosyltransferase 4 family. MraY subfamily. The cofactor is Mg(2+).

It is found in the cell inner membrane. It catalyses the reaction UDP-N-acetyl-alpha-D-muramoyl-L-alanyl-gamma-D-glutamyl-meso-2,6-diaminopimeloyl-D-alanyl-D-alanine + di-trans,octa-cis-undecaprenyl phosphate = di-trans,octa-cis-undecaprenyl diphospho-N-acetyl-alpha-D-muramoyl-L-alanyl-D-glutamyl-meso-2,6-diaminopimeloyl-D-alanyl-D-alanine + UMP. It participates in cell wall biogenesis; peptidoglycan biosynthesis. Catalyzes the initial step of the lipid cycle reactions in the biosynthesis of the cell wall peptidoglycan: transfers peptidoglycan precursor phospho-MurNAc-pentapeptide from UDP-MurNAc-pentapeptide onto the lipid carrier undecaprenyl phosphate, yielding undecaprenyl-pyrophosphoryl-MurNAc-pentapeptide, known as lipid I. The polypeptide is Phospho-N-acetylmuramoyl-pentapeptide-transferase (Actinobacillus pleuropneumoniae serotype 3 (strain JL03)).